Consider the following 239-residue polypeptide: Phosphothreonine lyase OspF (239 aa).

His104 functions as the Proton donor in the catalytic mechanism. Lys134 serves as the catalytic Proton acceptor.

This sequence belongs to the phosphothreonine lyase family.

It localises to the secreted. In terms of biological role, catalyzes the removal of the phosphate group from the phosphothreonine in the mitogen-activated protein kinases such as MAPK2/ERK2, MAPK3/ERK1, MAPK8 and MAPK14 in an irreversible reaction, thus preventing the downstream phosphorylation of histone H3. This epigenetic modification results in inhibition of the transcription of a specific subset of pro-inflammatory genes, and ultimately to a reduced immune response against the invading pathogen. The diminished immune response enhances the bacterium's ability to disseminate and multiply within the host. The protein is Phosphothreonine lyase OspF (ospF) of Shigella sonnei (strain Ss046).